The sequence spans 311 residues: Methionyl-tRNA formyltransferase (311 aa).

112–115 (SLLP) is a binding site for (6S)-5,6,7,8-tetrahydrofolate.

This sequence belongs to the Fmt family.

The enzyme catalyses L-methionyl-tRNA(fMet) + (6R)-10-formyltetrahydrofolate = N-formyl-L-methionyl-tRNA(fMet) + (6S)-5,6,7,8-tetrahydrofolate + H(+). In terms of biological role, attaches a formyl group to the free amino group of methionyl-tRNA(fMet). The formyl group appears to play a dual role in the initiator identity of N-formylmethionyl-tRNA by promoting its recognition by IF2 and preventing the misappropriation of this tRNA by the elongation apparatus. The chain is Methionyl-tRNA formyltransferase from Chelativorans sp. (strain BNC1).